The chain runs to 485 residues: Glutamate--tRNA ligase (485 aa).

A 'HIGH' region motif is present at residues 11–21; sequence PSPTGHLHIGN. The 'KMSKS' region motif lies at 252-256; the sequence is KLSKR. K255 is a binding site for ATP.

The protein belongs to the class-I aminoacyl-tRNA synthetase family. Glutamate--tRNA ligase type 1 subfamily. In terms of assembly, monomer.

The protein resides in the cytoplasm. It carries out the reaction tRNA(Glu) + L-glutamate + ATP = L-glutamyl-tRNA(Glu) + AMP + diphosphate. In terms of biological role, catalyzes the attachment of glutamate to tRNA(Glu) in a two-step reaction: glutamate is first activated by ATP to form Glu-AMP and then transferred to the acceptor end of tRNA(Glu). This is Glutamate--tRNA ligase from Bacillus licheniformis (strain ATCC 14580 / DSM 13 / JCM 2505 / CCUG 7422 / NBRC 12200 / NCIMB 9375 / NCTC 10341 / NRRL NRS-1264 / Gibson 46).